A 323-amino-acid polypeptide reads, in one-letter code: PTS system mannose-specific EIIAB component (323 aa).

The region spanning 2–124 (TIAIVIGTHG…VALAVETGRE (123 aa)) is the PTS EIIA type-4 domain. H10 acts as the Tele-phosphohistidine intermediate; for EIIA activity in catalysis. H10 is modified (phosphohistidine; by HPr). K55 carries the N6-acetyllysine modification. A hinge region spans residues 137–155 (AAPAPAAAAPKAAPTPAKP). Residues 157 to 320 (GPNDYMVIGL…KLKMMDLISK (164 aa)) form the PTS EIIB type-4 domain. The active-site Pros-phosphohistidine intermediate; for EIIB activity is the H175. A Phosphohistidine; by EIIA modification is found at H175. Position 234 is an N6-acetyllysine (K234).

Homodimer.

Its subcellular location is the cytoplasm. It is found in the cell inner membrane. The enzyme catalyses D-mannose(out) + N(pros)-phospho-L-histidyl-[protein] = D-mannose 6-phosphate(in) + L-histidyl-[protein]. In terms of biological role, the phosphoenolpyruvate-dependent sugar phosphotransferase system (sugar PTS), a major carbohydrate active transport system, catalyzes the phosphorylation of incoming sugar substrates concomitantly with their translocation across the cell membrane. The enzyme II ManXYZ PTS system is involved in mannose transport. The protein is PTS system mannose-specific EIIAB component (manX) of Escherichia coli O157:H7.